We begin with the raw amino-acid sequence, 379 residues long: Chaperone protein DnaJ (379 aa).

The 66-residue stretch at C7–G72 folds into the J domain. The CR-type zinc-finger motif lies at G135–E213. Zn(2+) contacts are provided by C148, C151, C165, C168, C187, C190, C201, and C204. CXXCXGXG motif repeat units lie at residues C148 to G155, C165 to G172, C187 to G194, and C201 to G208.

This sequence belongs to the DnaJ family. Homodimer. Zn(2+) is required as a cofactor.

It is found in the cytoplasm. Functionally, participates actively in the response to hyperosmotic and heat shock by preventing the aggregation of stress-denatured proteins and by disaggregating proteins, also in an autonomous, DnaK-independent fashion. Unfolded proteins bind initially to DnaJ; upon interaction with the DnaJ-bound protein, DnaK hydrolyzes its bound ATP, resulting in the formation of a stable complex. GrpE releases ADP from DnaK; ATP binding to DnaK triggers the release of the substrate protein, thus completing the reaction cycle. Several rounds of ATP-dependent interactions between DnaJ, DnaK and GrpE are required for fully efficient folding. Also involved, together with DnaK and GrpE, in the DNA replication of plasmids through activation of initiation proteins. The chain is Chaperone protein DnaJ from Rhodopseudomonas palustris (strain BisB18).